Consider the following 249-residue polypeptide: Adenylate kinase (249 aa).

Gly43–Thr48 contributes to the ATP binding site. The segment at Ala63–Val92 is NMP. Residues Thr64, Arg69, Gly90 to Val92, Gly119 to Arg122, and Gln126 contribute to the AMP site. An LID region spans residues Gly160–Asp197. Residues Arg161 and Ser170–Tyr171 each bind ATP. Residues Arg194 and Arg205 each contribute to the AMP site. Gln233 contributes to the ATP binding site.

The protein belongs to the adenylate kinase family. AK2 subfamily. In terms of assembly, monomer.

The protein resides in the cytoplasm. It is found in the cytosol. Its subcellular location is the mitochondrion intermembrane space. It catalyses the reaction AMP + ATP = 2 ADP. Its function is as follows. Catalyzes the reversible transfer of the terminal phosphate group between ATP and AMP. Plays an important role in cellular energy homeostasis and in adenine nucleotide metabolism. Adenylate kinase activity is critical for regulation of the phosphate utilization and the AMP de novo biosynthesis pathways. This Scheffersomyces stipitis (strain ATCC 58785 / CBS 6054 / NBRC 10063 / NRRL Y-11545) (Yeast) protein is Adenylate kinase.